Reading from the N-terminus, the 424-residue chain is D-inositol 3-phosphate glycosyltransferase (424 aa).

Histidine 16 is a 1D-myo-inositol 3-phosphate binding site. UDP-N-acetyl-alpha-D-glucosamine is bound by residues 22–23 and glycine 30; that span reads QP. 1D-myo-inositol 3-phosphate-binding positions include 27–32, lysine 85, tyrosine 118, threonine 142, and arginine 162; that span reads DAGGMN. UDP-N-acetyl-alpha-D-glucosamine contacts are provided by arginine 240 and lysine 245. Positions 313, 314, and 316 each coordinate Mg(2+). Glutamate 326 and glutamate 334 together coordinate UDP-N-acetyl-alpha-D-glucosamine. Residue threonine 340 participates in Mg(2+) binding.

The protein belongs to the glycosyltransferase group 1 family. MshA subfamily. As to quaternary structure, homodimer.

The catalysed reaction is 1D-myo-inositol 3-phosphate + UDP-N-acetyl-alpha-D-glucosamine = 1D-myo-inositol 2-acetamido-2-deoxy-alpha-D-glucopyranoside 3-phosphate + UDP + H(+). Its function is as follows. Catalyzes the transfer of a N-acetyl-glucosamine moiety to 1D-myo-inositol 3-phosphate to produce 1D-myo-inositol 2-acetamido-2-deoxy-glucopyranoside 3-phosphate in the mycothiol biosynthesis pathway. The polypeptide is D-inositol 3-phosphate glycosyltransferase (Jonesia denitrificans (strain ATCC 14870 / DSM 20603 / BCRC 15368 / CIP 55.134 / JCM 11481 / NBRC 15587 / NCTC 10816 / Prevot 55134) (Listeria denitrificans)).